Here is a 505-residue protein sequence, read N- to C-terminus: MVTIRADEISNIIRERIEQYNREVKVVTIGTVLQVGDGIARIYGLDEVMAGELVEFEEGTIGIALNLESNNVGVVLMGDGLMIQEGSSVKATGKIAQIPVSEAYLGRVINALAKPIDGRGEISASESRLIESPAPGIISRRSVYEPLQTGLIAIDSMIPIGRGQRELIIGDRQTGKTAVATDTILNQQGQNVICVYVAIGQKASSVAQVVTTLQERGAMDYTIVVAETADSPATLQYLAPYTGAALAEFFMYLKQHTLIIYDDPSKQAQAYRQMSLLLRRPPGREAYPGDVFYLHSRLLERAAKLSSQLGEGSMTALPIVETQSGDVSAYIPTNVISITDGQIFLSADLFNAGIRPAINVGISVSRVGSAAQIKAMKQVAGKLKLELAQFAELEAFAQFASDLDKATQNQLARGQRLRELLKQSQSAPLTVEEQIMTIYTGTNGYLDSLEIGQVRKFLVELRTYLKTNKPQFQEIISSTKTFTEEAETILKEAIQEQMERFLLQE.

Residue 170-177 coordinates ATP; the sequence is GDRQTGKT.

The protein belongs to the ATPase alpha/beta chains family. F-type ATPases have 2 components, CF(1) - the catalytic core - and CF(0) - the membrane proton channel. CF(1) has five subunits: alpha(3), beta(3), gamma(1), delta(1), epsilon(1). CF(0) has four main subunits: a, b, b' and c.

It is found in the plastid. The protein localises to the chloroplast thylakoid membrane. The catalysed reaction is ATP + H2O + 4 H(+)(in) = ADP + phosphate + 5 H(+)(out). Functionally, produces ATP from ADP in the presence of a proton gradient across the membrane. The alpha chain is a regulatory subunit. In Carica papaya (Papaya), this protein is ATP synthase subunit alpha, chloroplastic.